Here is a 327-residue protein sequence, read N- to C-terminus: ATPase ASNA1 homolog (327 aa).

26-33 (KGGVGKTT) lines the ATP pocket. The active site involves aspartate 57. 2 residues coordinate ATP: glutamate 238 and asparagine 265. Zn(2+) is bound by residues cysteine 274 and cysteine 277.

The protein belongs to the arsA ATPase family. As to quaternary structure, homodimer.

The protein localises to the cytoplasm. The protein resides in the endoplasmic reticulum. In terms of biological role, ATPase required for the post-translational delivery of tail-anchored (TA) proteins to the endoplasmic reticulum. Recognizes and selectively binds the transmembrane domain of TA proteins in the cytosol. This complex then targets to the endoplasmic reticulum by membrane-bound receptors, where the tail-anchored protein is released for insertion. This process is regulated by ATP binding and hydrolysis. ATP binding drives the homodimer towards the closed dimer state, facilitating recognition of newly synthesized TA membrane proteins. ATP hydrolysis is required for insertion. Subsequently, the homodimer reverts towards the open dimer state, lowering its affinity for the membrane-bound receptor, and returning it to the cytosol to initiate a new round of targeting. The protein is ATPase ASNA1 homolog of Entamoeba dispar (strain ATCC PRA-260 / SAW760).